We begin with the raw amino-acid sequence, 678 residues long: NADPH--cytochrome P450 reductase (678 aa).

N-acetylglycine is present on glycine 2. Topologically, residues 2–22 are lumenal; sequence GDSHEDTSATVPEAVAEEVSL. Residues 23–43 traverse the membrane as a helical segment; sequence FSTTDIVLFSLIVGVLTYWFI. The Cytoplasmic portion of the chain corresponds to 44–678; that stretch reads FKKKKEEIPE…KGRYSLDVWS (635 aa). A Flavodoxin-like domain is found at 80–224; the sequence is IIVFYGSQTG…DFITWREQFW (145 aa). Residues 86–91, 138–141, 173–182, and aspartate 208 contribute to the FMN site; these read SQTGTA, ATYG, and LGNKTYEHFN. The FAD-binding FR-type domain maps to 279–521; it reads KNPFLAAVTT…FVRKSQFRLP (243 aa). Arginine 298 provides a ligand contact to NADP(+). FAD is bound by residues arginine 424, 454-457, 472-474, tyrosine 478, and 488-491; these read RYYS, CAV, and GVAT. NADP(+) is bound by residues threonine 535, 596 to 597, 602 to 606, and aspartate 639; these read SR and KVYVQ. Residue tryptophan 677 participates in FAD binding.

The protein belongs to the NADPH--cytochrome P450 reductase family. It in the N-terminal section; belongs to the flavodoxin family. This sequence in the C-terminal section; belongs to the flavoprotein pyridine nucleotide cytochrome reductase family. It depends on FAD as a cofactor. FMN is required as a cofactor.

It is found in the endoplasmic reticulum membrane. It carries out the reaction 2 oxidized [cytochrome P450] + NADPH = 2 reduced [cytochrome P450] + NADP(+) + H(+). Its function is as follows. This enzyme is required for electron transfer from NADP to cytochrome P450 in microsomes. It can also provide electron transfer to heme oxygenase and cytochrome B5. The sequence is that of NADPH--cytochrome P450 reductase from Mus musculus (Mouse).